Here is a 1412-residue protein sequence, read N- to C-terminus: DNA-directed RNA polymerase subunit beta' (1412 aa).

Positions 70, 72, 85, and 88 each coordinate Zn(2+). Mg(2+) is bound by residues Asp-460, Asp-462, and Asp-464. Zn(2+)-binding residues include Cys-819, Cys-893, Cys-900, and Cys-903. Positions 1391–1412 (AEESFEFGTPETPAAEQQHSGE) are disordered.

It belongs to the RNA polymerase beta' chain family. As to quaternary structure, the RNAP catalytic core consists of 2 alpha, 1 beta, 1 beta' and 1 omega subunit. When a sigma factor is associated with the core the holoenzyme is formed, which can initiate transcription. Requires Mg(2+) as cofactor. Zn(2+) is required as a cofactor.

The catalysed reaction is RNA(n) + a ribonucleoside 5'-triphosphate = RNA(n+1) + diphosphate. Its function is as follows. DNA-dependent RNA polymerase catalyzes the transcription of DNA into RNA using the four ribonucleoside triphosphates as substrates. The protein is DNA-directed RNA polymerase subunit beta' of Paraburkholderia xenovorans (strain LB400).